A 1841-amino-acid chain; its full sequence is Cell division control protein 12 (1841 aa).

2 stretches are compositionally biased toward polar residues: residues 1 to 25 (MRNS…TPSA) and 46 to 63 (SIES…QSVT). Disordered regions lie at residues 1 to 63 (MRNS…QSVT), 78 to 134 (NSHN…GPRL), and 152 to 181 (PPVH…RTKH). The GBD/FH3 domain maps to 232–620 (TRPPSLDQLI…RILLNSKVSN (389 aa)). The stretch at 674–715 (LGAEDLIAKLNKEVEDQKDVILSQKRTNETLKTEIDALQKSH) forms a coiled coil. The FH1 domain maps to 740 to 972 (GSTNSKERII…VSPAVSNNIS (233 aa)). The FH2 domain maps to 980–1391 (TGLTRRPTRR…QHRRLNLVNN (412 aa)). Residues 1260–1290 (TEAAKLNIEAIEQECSELIRGCQNLQIDCDS) are a coiled coil. Disordered stretches follow at residues 1445-1661 (EAPN…ENNL), 1696-1715 (TTTT…INTI), and 1735-1758 (KSNK…GSNK). 2 stretches are compositionally biased toward polar residues: residues 1447-1456 (PNTSTKSSPA) and 1483-1497 (SEST…NITP). Over residues 1499-1516 (KKGEVSSKAKKGYNYEKR) the composition is skewed to basic and acidic residues. Residues 1539 to 1553 (GRSASYTFSDPSSLE) show a composition bias toward polar residues. At S1541 the chain carries Phosphoserine. Position 1544 is a phosphotyrosine (Y1544). Over residues 1554–1567 (DSNRQKPFNGEKFR) the composition is skewed to basic and acidic residues. Residues 1568–1577 (RFSSKSRRGS) are compositionally biased toward basic residues. The segment covering 1594 to 1604 (INNNQTSPQNK) has biased composition (polar residues). Basic and acidic residues predominate over residues 1605-1621 (PSKESLKSDTISNEKKV). Over residues 1630-1641 (NLLTPTISNGTR) the composition is skewed to polar residues.

This sequence belongs to the formin homology family. BNI1 subfamily. In terms of assembly, interacts with profilin and actin at the FH1 and FH2 domains respectively.

It localises to the nucleus. Plays a role in the cell cycle. Involved in cytokinesis. Component of the cell division ring. In the absence of profilin, caps the barbed end of actin filaments, thus preventing subunit addition and dissociation. In the presence of profilin, nucleates actin filaments that grow rapidly from their barbed ends. This chain is Cell division control protein 12 (cdc12), found in Schizosaccharomyces pombe (strain 972 / ATCC 24843) (Fission yeast).